We begin with the raw amino-acid sequence, 336 residues long: Dihydroorotate dehydrogenase (quinone) (336 aa).

FMN contacts are provided by residues 62–66 (AGLEK) and Thr86. Residue Lys66 participates in substrate binding. Position 111 to 115 (111 to 115 (NRMGF)) interacts with substrate. Residues Asn139 and Asn172 each coordinate FMN. Asn172 is a binding site for substrate. The Nucleophile role is filled by Ser175. Substrate is bound at residue Asn177. Positions 217 and 245 each coordinate FMN. 246–247 (NT) provides a ligand contact to substrate. FMN-binding positions include Gly268, Gly297, and 318–319 (YS).

This sequence belongs to the dihydroorotate dehydrogenase family. Type 2 subfamily. As to quaternary structure, monomer. The cofactor is FMN.

It localises to the cell membrane. The catalysed reaction is (S)-dihydroorotate + a quinone = orotate + a quinol. The protein operates within pyrimidine metabolism; UMP biosynthesis via de novo pathway; orotate from (S)-dihydroorotate (quinone route): step 1/1. Functionally, catalyzes the conversion of dihydroorotate to orotate with quinone as electron acceptor. This chain is Dihydroorotate dehydrogenase (quinone), found in Aliivibrio salmonicida (strain LFI1238) (Vibrio salmonicida (strain LFI1238)).